A 291-amino-acid chain; its full sequence is Probable plasmid-partitioning protein ParB (291 aa).

The protein belongs to the ParB family.

In Deinococcus radiodurans (strain ATCC 13939 / DSM 20539 / JCM 16871 / CCUG 27074 / LMG 4051 / NBRC 15346 / NCIMB 9279 / VKM B-1422 / R1), this protein is Probable plasmid-partitioning protein ParB.